Consider the following 525-residue polypeptide: Bifunctional purine biosynthesis protein PurH (525 aa).

An MGS-like domain is found at 1-149 (MSDPVIKRAL…KNNESVTVVT (149 aa)).

Belongs to the PurH family.

The catalysed reaction is (6R)-10-formyltetrahydrofolate + 5-amino-1-(5-phospho-beta-D-ribosyl)imidazole-4-carboxamide = 5-formamido-1-(5-phospho-D-ribosyl)imidazole-4-carboxamide + (6S)-5,6,7,8-tetrahydrofolate. It catalyses the reaction IMP + H2O = 5-formamido-1-(5-phospho-D-ribosyl)imidazole-4-carboxamide. It functions in the pathway purine metabolism; IMP biosynthesis via de novo pathway; 5-formamido-1-(5-phospho-D-ribosyl)imidazole-4-carboxamide from 5-amino-1-(5-phospho-D-ribosyl)imidazole-4-carboxamide (10-formyl THF route): step 1/1. It participates in purine metabolism; IMP biosynthesis via de novo pathway; IMP from 5-formamido-1-(5-phospho-D-ribosyl)imidazole-4-carboxamide: step 1/1. This is Bifunctional purine biosynthesis protein PurH from Prosthecochloris aestuarii (strain DSM 271 / SK 413).